The chain runs to 92 residues: Small ribosomal subunit protein bS20 (92 aa).

It belongs to the bacterial ribosomal protein bS20 family.

Functionally, binds directly to 16S ribosomal RNA. The polypeptide is Small ribosomal subunit protein bS20 (Rickettsia conorii (strain ATCC VR-613 / Malish 7)).